We begin with the raw amino-acid sequence, 322 residues long: Extracellular metalloprotease AFUB_008060 (322 aa).

A signal peptide spans 1-22; the sequence is MLPFNSCVYVLLIISLMSNCRA. Residues Asn-123 and Asn-197 are each glycosylated (N-linked (GlcNAc...) asparagine). Position 233 (His-233) interacts with Zn(2+). The active site involves Glu-234. Zn(2+) is bound at residue His-237. Residues Cys-272 and Cys-299 are joined by a disulfide bond.

It belongs to the peptidase M43B family.

It is found in the secreted. In terms of biological role, secreted metalloproteinase that allows assimilation of proteinaceous substrates. Plays a pivotal role as a pathogenicity determinant during infections and contributes to the ability of the pathogen to persist within the mammalian host. This chain is Extracellular metalloprotease AFUB_008060, found in Aspergillus fumigatus (strain CBS 144.89 / FGSC A1163 / CEA10) (Neosartorya fumigata).